The sequence spans 72 residues: MLIPWQELSPETLENLIESFVLREGTDYGEHERTLEQKVADVKRQLQCGEAVLVWSELHETVNIMPRSQFRE.

It belongs to the UPF0270 family.

This chain is UPF0270 protein YheU, found in Escherichia fergusonii (strain ATCC 35469 / DSM 13698 / CCUG 18766 / IAM 14443 / JCM 21226 / LMG 7866 / NBRC 102419 / NCTC 12128 / CDC 0568-73).